A 116-amino-acid chain; its full sequence is Large ribosomal subunit protein uL18 (116 aa).

The protein belongs to the universal ribosomal protein uL18 family. As to quaternary structure, part of the 50S ribosomal subunit; part of the 5S rRNA/L5/L18/L25 subcomplex. Contacts the 5S and 23S rRNAs.

Its function is as follows. This is one of the proteins that bind and probably mediate the attachment of the 5S RNA into the large ribosomal subunit, where it forms part of the central protuberance. The chain is Large ribosomal subunit protein uL18 from Exiguobacterium sibiricum (strain DSM 17290 / CCUG 55495 / CIP 109462 / JCM 13490 / 255-15).